Here is a 1343-residue protein sequence, read N- to C-terminus: DNA-directed RNA polymerase subunit beta (1343 aa).

This sequence belongs to the RNA polymerase beta chain family. As to quaternary structure, the RNAP catalytic core consists of 2 alpha, 1 beta, 1 beta' and 1 omega subunit. When a sigma factor is associated with the core the holoenzyme is formed, which can initiate transcription.

The catalysed reaction is RNA(n) + a ribonucleoside 5'-triphosphate = RNA(n+1) + diphosphate. Its function is as follows. DNA-dependent RNA polymerase catalyzes the transcription of DNA into RNA using the four ribonucleoside triphosphates as substrates. The protein is DNA-directed RNA polymerase subunit beta of Haemophilus influenzae (strain ATCC 51907 / DSM 11121 / KW20 / Rd).